We begin with the raw amino-acid sequence, 72 residues long: V-type proton ATPase subunit e (72 aa).

Residues 1–2 lie on the Lumenal side of the membrane; the sequence is MS. Residues 3–23 traverse the membrane as a helical segment; sequence FYTVVATFLSVVLASAVFWVL. At 24–34 the chain is on the cytoplasmic side; the sequence is APKENQTVWRS. Residues 35–55 form a helical membrane-spanning segment; that stretch reads TIILSMSMMFLMWAVTYLSQL. Residues 56–72 lie on the Lumenal side of the membrane; sequence HPLVVPRRSDLRPEFAE.

It belongs to the V-ATPase e1/e2 subunit family. In terms of assembly, V-ATPase is a heteromultimeric enzyme composed of a peripheral catalytic V1 complex (components A to H) attached to an integral membrane V0 proton pore complex (components: a, c, c', c'', d, e, f and VOA1).

Its subcellular location is the vacuole membrane. Subunit of the V0 complex of vacuolar(H+)-ATPase (V-ATPase), a multisubunit enzyme composed of a peripheral complex (V1) that hydrolyzes ATP and a membrane integral complex (V0) that translocates protons. V-ATPase is responsible for acidifying and maintaining the pH of intracellular compartments. The polypeptide is V-type proton ATPase subunit e (VMA9) (Eremothecium gossypii (strain ATCC 10895 / CBS 109.51 / FGSC 9923 / NRRL Y-1056) (Yeast)).